The primary structure comprises 396 residues: Na(+)/H(+) antiporter NhaA 2 (396 aa).

Transmembrane regions (helical) follow at residues 17-37 (LSGL…NSDF), 62-82 (LLHW…GLEI), 98-118 (SFPI…YISL), 125-145 (GFGV…MLLG), 154-174 (LFLV…VAIF), 179-199 (LHFE…FLNY), 209-229 (IILG…STIA), 268-288 (FSAF…IIDF), 296-316 (LIVL…IFSF), 337-357 (IFAV…ISHL), and 368-388 (VKLG…VLLI).

This sequence belongs to the NhaA Na(+)/H(+) (TC 2.A.33) antiporter family.

The protein localises to the cell inner membrane. It catalyses the reaction Na(+)(in) + 2 H(+)(out) = Na(+)(out) + 2 H(+)(in). In terms of biological role, na(+)/H(+) antiporter that extrudes sodium in exchange for external protons. The chain is Na(+)/H(+) antiporter NhaA 2 from Aliarcobacter butzleri (strain RM4018) (Arcobacter butzleri).